The chain runs to 441 residues: Histidinol dehydrogenase (441 aa).

The NAD(+) site is built by tyrosine 136, glutamine 197, and asparagine 220. 3 residues coordinate substrate: serine 243, glutamine 265, and histidine 268. Positions 265 and 268 each coordinate Zn(2+). Catalysis depends on proton acceptor residues glutamate 333 and histidine 334. Residues histidine 334, aspartate 367, glutamate 421, and histidine 426 each coordinate substrate. Aspartate 367 contacts Zn(2+). Histidine 426 contacts Zn(2+).

The protein belongs to the histidinol dehydrogenase family. Zn(2+) serves as cofactor.

It carries out the reaction L-histidinol + 2 NAD(+) + H2O = L-histidine + 2 NADH + 3 H(+). It participates in amino-acid biosynthesis; L-histidine biosynthesis; L-histidine from 5-phospho-alpha-D-ribose 1-diphosphate: step 9/9. Functionally, catalyzes the sequential NAD-dependent oxidations of L-histidinol to L-histidinaldehyde and then to L-histidine. The polypeptide is Histidinol dehydrogenase (Pseudomonas putida (strain ATCC 47054 / DSM 6125 / CFBP 8728 / NCIMB 11950 / KT2440)).